The primary structure comprises 306 residues: tRNA pseudouridine synthase B (306 aa).

Asp-43 (nucleophile) is an active-site residue.

This sequence belongs to the pseudouridine synthase TruB family. Type 1 subfamily.

The catalysed reaction is uridine(55) in tRNA = pseudouridine(55) in tRNA. Functionally, responsible for synthesis of pseudouridine from uracil-55 in the psi GC loop of transfer RNAs. The protein is tRNA pseudouridine synthase B of Syntrophobacter fumaroxidans (strain DSM 10017 / MPOB).